The chain runs to 149 residues: 3-dehydroquinate dehydratase (149 aa).

Tyr-26 acts as the Proton acceptor in catalysis. Positions 77, 83, and 90 each coordinate substrate. The Proton donor role is filled by His-103. Substrate-binding positions include 104 to 105 and Arg-114; that span reads LS.

Belongs to the type-II 3-dehydroquinase family. In terms of assembly, homododecamer.

It catalyses the reaction 3-dehydroquinate = 3-dehydroshikimate + H2O. The protein operates within metabolic intermediate biosynthesis; chorismate biosynthesis; chorismate from D-erythrose 4-phosphate and phosphoenolpyruvate: step 3/7. Catalyzes a trans-dehydration via an enolate intermediate. The polypeptide is 3-dehydroquinate dehydratase (Psychromonas ingrahamii (strain DSM 17664 / CCUG 51855 / 37)).